Consider the following 384-residue polypeptide: Deoxyguanosinetriphosphate triphosphohydrolase-like protein (384 aa).

The 137-residue stretch at 63–199 (RLTHSLEVAT…ASLADDISYI (137 aa)) folds into the HD domain.

The protein belongs to the dGTPase family. Type 2 subfamily.

This is Deoxyguanosinetriphosphate triphosphohydrolase-like protein from Rickettsia typhi (strain ATCC VR-144 / Wilmington).